Reading from the N-terminus, the 375-residue chain is DNA replication and repair protein RecF (375 aa).

30–37 (GENAQGKT) is an ATP binding site.

The protein belongs to the RecF family.

The protein resides in the cytoplasm. Functionally, the RecF protein is involved in DNA metabolism; it is required for DNA replication and normal SOS inducibility. RecF binds preferentially to single-stranded, linear DNA. It also seems to bind ATP. This Bacillus cereus (strain G9842) protein is DNA replication and repair protein RecF.